A 614-amino-acid chain; its full sequence is Afadin- and alpha-actinin-binding protein (614 aa).

2 coiled-coil regions span residues 131–227 and 266–293; these read MDHL…IAMD and RQKQ…SLLS. Residues Ser290, Ser293, and Ser312 each carry the phosphoserine modification. The segment at 292–317 is disordered; that stretch reads LSPQKKKPRERVDDSTGTVISDVEED. The stretch at 374 to 460 forms a coiled coil; sequence ISRQDHEQET…RSFTEAAIRL (87 aa). Ser536, Ser540, and Ser542 each carry phosphoserine.

This sequence belongs to the ADIP family. In terms of assembly, interacts with afadin and alpha-actinin. Interacts with VAV2. Interacts with SSX2 and SSX3. Does not interact with SSX1 and SSX4. Interacts with PCM1. Interacts with WRAP73. As to expression, widely expressed, with the highest expression in brain, intermediate expression in kidney, testis, spinal cord, liver, heart, lung, skeletal muscle, ovary, fetal liver and fetal brain, and little to no expression in pancreas and spleen. All specific brain regions showed intermediate to high expression, with highest expression in amygdala. Also expressed in fetal tissues, mainly in liver and brain.

It is found in the cell junction. Its subcellular location is the adherens junction. The protein localises to the nucleus. It localises to the cytoplasm. The protein resides in the cytoskeleton. It is found in the microtubule organizing center. Its subcellular location is the centrosome. The protein localises to the centriolar satellite. It localises to the cilium basal body. In terms of biological role, belongs to an adhesion system, which plays a role in the organization of homotypic, interneuronal and heterotypic cell-cell adherens junctions (AJs). May connect the nectin-afadin and E-cadherin-catenin system through alpha-actinin and may be involved in organization of the actin cytoskeleton at AJs through afadin and alpha-actinin. Involved in cell movement: localizes at the leading edge of moving cells in response to PDGF and is required for the formation of the leading edge and the promotion of cell movement, possibly via activation of Rac signaling. Acts as a centrosome maturation factor, probably by maintaining the integrity of the pericentriolar material and proper microtubule nucleation at mitotic spindle poles. The function seems to implicate at least in part WRAP73; the SSX2IP:WRAP73 complex is proposed to act as regulator of spindle anchoring at the mitotic centrosome. Involved in ciliogenesis. It is required for targeted recruitment of the BBSome, CEP290, RAB8, and SSTR3 to the cilia. The chain is Afadin- and alpha-actinin-binding protein (SSX2IP) from Homo sapiens (Human).